The primary structure comprises 305 residues: Coenzyme PQQ synthesis protein B (305 aa).

This sequence belongs to the PqqB family.

It functions in the pathway cofactor biosynthesis; pyrroloquinoline quinone biosynthesis. Its function is as follows. May be involved in the transport of PQQ or its precursor to the periplasm. The polypeptide is Coenzyme PQQ synthesis protein B (Methylobacillus flagellatus).